Reading from the N-terminus, the 628-residue chain is Dihydroxy-acid dehydratase (628 aa).

Position 80 (aspartate 80) interacts with Mg(2+). Cysteine 121 serves as a coordination point for [2Fe-2S] cluster. The Mg(2+) site is built by aspartate 122 and lysine 123. Lysine 123 is modified (N6-carboxylysine). Cysteine 207 contributes to the [2Fe-2S] cluster binding site. Position 503 (glutamate 503) interacts with Mg(2+). Residue serine 529 is the Proton acceptor of the active site.

The protein belongs to the IlvD/Edd family. In terms of assembly, homodimer. Requires [2Fe-2S] cluster as cofactor. It depends on Mg(2+) as a cofactor.

It catalyses the reaction (2R)-2,3-dihydroxy-3-methylbutanoate = 3-methyl-2-oxobutanoate + H2O. The catalysed reaction is (2R,3R)-2,3-dihydroxy-3-methylpentanoate = (S)-3-methyl-2-oxopentanoate + H2O. Its pathway is amino-acid biosynthesis; L-isoleucine biosynthesis; L-isoleucine from 2-oxobutanoate: step 3/4. It functions in the pathway amino-acid biosynthesis; L-valine biosynthesis; L-valine from pyruvate: step 3/4. Functionally, functions in the biosynthesis of branched-chain amino acids. Catalyzes the dehydration of (2R,3R)-2,3-dihydroxy-3-methylpentanoate (2,3-dihydroxy-3-methylvalerate) into 2-oxo-3-methylpentanoate (2-oxo-3-methylvalerate) and of (2R)-2,3-dihydroxy-3-methylbutanoate (2,3-dihydroxyisovalerate) into 2-oxo-3-methylbutanoate (2-oxoisovalerate), the penultimate precursor to L-isoleucine and L-valine, respectively. This chain is Dihydroxy-acid dehydratase, found in Psychrobacter arcticus (strain DSM 17307 / VKM B-2377 / 273-4).